The sequence spans 349 residues: Phosphate carrier protein, mitochondrial (349 aa).

Solcar repeat units lie at residues 47–131, 144–229, and 246–324; these read KYFA…FKVQ, YRTF…TVEL, and EQLV…VKVW. A run of 6 helical transmembrane segments spans residues 48–68, 108–128, 147–167, 207–227, 248–268, and 304–324; these read YFAL…TAVV, APTF…YEVF, FVYL…LSPL, PLWG…EKTV, LVVT…VSHP, and IIMI…VKVW.

The protein belongs to the mitochondrial carrier (TC 2.A.29) family.

The protein localises to the mitochondrion inner membrane. In terms of biological role, transport of phosphate groups from the cytosol to the mitochondrial matrix. The polypeptide is Phosphate carrier protein, mitochondrial (Choristoneura fumiferana (Spruce budworm moth)).